The chain runs to 445 residues: AVMGRNLALNIESRGYTVSIFNRSREKTEEVIAENPGKKLVPYYTVKEFVESLETPRRILLMVKAGAGTDAAIDSLKPYLDKGDIIIDGGNTFFQDTIRRNRELSAEGFNFIGTGVSGGEEGALKGPSIMPGGQKEAYELVAPILTKIAAVAEDGEPCVTYIGADGAGHYVKMVHNGIEYGDMQLIAEAYSLLKGGLNLSNEELAQTFTEWNNGELSSYLIDITKDIFTKKDEDGNYLVDVILDEAANKGTGKWTSQSALDLGEPLSLITESVFARYISSLKDQRVAASKVLSGPQAQPAGNKAEFIEKVRRALYLGKIVSYAQGFSQLRAASEEYNWDLNYGEIAKIFRAGCIIRAQFLQKITDAYAENPQIANLLLAPYFKQIADDYQQALRDVVAYAVQNGIPVPTFAAAVAYYDSYRAAVLPANLIQAQRDYFGAHTYKRI.

NADP(+)-binding positions include 1-4 (AVMG), 22-24 (NRS), 63-65 (VKA), and asparagine 91. Residues asparagine 91 and 117–119 (SGG) each bind substrate. Lysine 172 (proton acceptor) is an active-site residue. 175 to 176 (HN) provides a ligand contact to substrate. Catalysis depends on glutamate 179, which acts as the Proton donor. Tyrosine 180, lysine 249, arginine 276, arginine 434, and histidine 440 together coordinate substrate.

The protein belongs to the 6-phosphogluconate dehydrogenase family. As to quaternary structure, homodimer.

It catalyses the reaction 6-phospho-D-gluconate + NADP(+) = D-ribulose 5-phosphate + CO2 + NADPH. It participates in carbohydrate degradation; pentose phosphate pathway; D-ribulose 5-phosphate from D-glucose 6-phosphate (oxidative stage): step 3/3. Functionally, catalyzes the oxidative decarboxylation of 6-phosphogluconate to ribulose 5-phosphate and CO(2), with concomitant reduction of NADP to NADPH. This is 6-phosphogluconate dehydrogenase, decarboxylating (gnd) from Shigella boydii.